The primary structure comprises 356 residues: MNVGIFSRWNATCGVSLHAEMIGRELLRRGYPITVFAPYLESASRWWHHKLIRPDEEYVVRCYEELSPDGKEGKIDIEKVLEREIDFLIVESYEKLPYKDVEKLVKILKDKGIPSIAIIHEGDYEDIRYTDMNIFEKVCVFDERYVKEVLKDRVSEEKVEIIPYPCYPVREGSREFAEDGVIKFFSFGRQPKEEYCPYIEGLKVFKRDFPNVKYRIVRAMEPLKIFEDFVEQEERILDYEEIVKELHSADFHLLPKGNTKRVVVSSTLYQVLGTLTLTVVPDNRFFETLPHGEEAPVIFYRDVLELVKELKKASADEEYRKKIRENASKFVEENSVERITDRFENLINSILVKNVH.

This sequence belongs to the MDIP synthase family. The cofactor is Mg(2+).

The enzyme catalyses bis(myo-inositol) 1,3'-phosphate + GDP-alpha-D-mannose = 2-O-(beta-D-mannosyl)-bis(myo-inositol) 1,3'-phosphate + GDP + H(+). The catalysed reaction is 2-O-(beta-D-mannosyl)-bis(myo-inositol) 1,3'-phosphate + GDP-alpha-D-mannose = 2-O-(beta-D-mannosyl-(1-&gt;2)-beta-D-mannosyl)-bis(myo-inositol) 1,3'-phosphate + GDP + H(+). It carries out the reaction bis(myo-inositol) 1,3'-phosphate + 2 GDP-alpha-D-mannose = 2-O-(beta-D-mannosyl-(1-&gt;2)-beta-D-mannosyl)-bis(myo-inositol) 1,3'-phosphate + 2 GDP + 2 H(+). Catalyzes the transfer of the mannosyl group from GDP-mannose to di-myo-inositol-1,3'-phosphate (DIP), producing mannosyl-di-myo-inositol phosphate (MDIP). Can also use MDIP as an acceptor of a second mannose residue, yielding di-mannosyl-di-myo-inositol phosphate (MMDIP). This is GDP-mannose:di-myo-inositol-1,3'-phosphate beta-1,2-mannosyltransferase from Aquifex aeolicus (strain VF5).